The following is a 233-amino-acid chain: UPF0502 protein Mpe_A1449 (233 aa).

It belongs to the UPF0502 family.

This is UPF0502 protein Mpe_A1449 from Methylibium petroleiphilum (strain ATCC BAA-1232 / LMG 22953 / PM1).